The sequence spans 251 residues: tRNA (guanine-N(1)-)-methyltransferase (251 aa).

Residues Gly113 and 133–138 (IGDYVL) each bind S-adenosyl-L-methionine.

This sequence belongs to the RNA methyltransferase TrmD family. In terms of assembly, homodimer.

It localises to the cytoplasm. It catalyses the reaction guanosine(37) in tRNA + S-adenosyl-L-methionine = N(1)-methylguanosine(37) in tRNA + S-adenosyl-L-homocysteine + H(+). Specifically methylates guanosine-37 in various tRNAs. This is tRNA (guanine-N(1)-)-methyltransferase from Pectobacterium carotovorum subsp. carotovorum (strain PC1).